Here is a 427-residue protein sequence, read N- to C-terminus: Serine--tRNA ligase (427 aa).

L-serine is bound at residue 231–233 (TAE). Position 262-264 (262-264 (RSE)) interacts with ATP. Glu-285 is an L-serine binding site. 349–352 (EISS) provides a ligand contact to ATP. Ser-385 contacts L-serine.

This sequence belongs to the class-II aminoacyl-tRNA synthetase family. Type-1 seryl-tRNA synthetase subfamily. Homodimer. The tRNA molecule binds across the dimer.

Its subcellular location is the cytoplasm. It catalyses the reaction tRNA(Ser) + L-serine + ATP = L-seryl-tRNA(Ser) + AMP + diphosphate + H(+). It carries out the reaction tRNA(Sec) + L-serine + ATP = L-seryl-tRNA(Sec) + AMP + diphosphate + H(+). It functions in the pathway aminoacyl-tRNA biosynthesis; selenocysteinyl-tRNA(Sec) biosynthesis; L-seryl-tRNA(Sec) from L-serine and tRNA(Sec): step 1/1. In terms of biological role, catalyzes the attachment of serine to tRNA(Ser). Is also able to aminoacylate tRNA(Sec) with serine, to form the misacylated tRNA L-seryl-tRNA(Sec), which will be further converted into selenocysteinyl-tRNA(Sec). The protein is Serine--tRNA ligase of Brucella melitensis biotype 2 (strain ATCC 23457).